The chain runs to 154 residues: Putative lipoprotein MAB_4074c (154 aa).

A signal peptide spans 1-21 (MMNRVIVGAMGLLAAGAVVVG). C22 is lipidated: N-palmitoyl cysteine. The S-diacylglycerol cysteine moiety is linked to residue C22.

This sequence belongs to the mycobacterial 19 kDa antigen family.

The protein resides in the cell membrane. In Mycobacteroides abscessus (strain ATCC 19977 / DSM 44196 / CCUG 20993 / CIP 104536 / JCM 13569 / NCTC 13031 / TMC 1543 / L948) (Mycobacterium abscessus), this protein is Putative lipoprotein MAB_4074c.